The chain runs to 443 residues: Probable nitrate/nitrite antiporter NarK1 (443 aa).

12 consecutive transmembrane segments (helical) span residues 23 to 43 (TLAFTLMFAAWLMFGVLGVPI), 56 to 76 (WISALAILNGSLWRLLAGILA), 79 to 99 (YGGRLVFTLMLFFTAIPAYLV), 108 to 128 (LLLYAFLVGFAGNSFSVGIAW), 142 to 164 (LGVFGAGNVGASVTKFIGPALIA), 182 to 202 (FIPFLYAVLLVLMGFVLWFGT), 230 to 250 (FSLYYVVVFGAYVALSAWLPK), 255 to 275 (VFGLPLHEAALLTALFIFPAS), 298 to 318 (FGIILLASGVLMMPEGHIVLY), 329 to 349 (FTMGVELFTLLVFLIGVGMGI), 368 to 388 (AVGGLVGMLGALGGFFLPPLF), and 401 to 421 (TFFVLFLLAAISFLWMHLTVL).

Belongs to the major facilitator superfamily. Nitrate/nitrite porter (TC 2.A.1.8) family.

It localises to the cell membrane. The catalysed reaction is nitrate(in) + nitrite(out) = nitrate(out) + nitrite(in). Functionally, probable nitrate/nitrite antiporter that may be involved in nitrate import and nitrite export during anaerobic growth. This is Probable nitrate/nitrite antiporter NarK1 from Thermus thermophilus.